The following is a 484-amino-acid chain: Ribosomal RNA small subunit methyltransferase F (484 aa).

S-adenosyl-L-methionine contacts are provided by residues 119 to 125 (ASAPGSK), Glu-143, Asp-170, and Asp-188. Cys-241 functions as the Nucleophile in the catalytic mechanism.

The protein belongs to the class I-like SAM-binding methyltransferase superfamily. RsmB/NOP family.

It localises to the cytoplasm. The enzyme catalyses cytidine(1407) in 16S rRNA + S-adenosyl-L-methionine = 5-methylcytidine(1407) in 16S rRNA + S-adenosyl-L-homocysteine + H(+). Specifically methylates the cytosine at position 1407 (m5C1407) of 16S rRNA. This Shewanella frigidimarina (strain NCIMB 400) protein is Ribosomal RNA small subunit methyltransferase F.